The following is a 184-amino-acid chain: MKNLTDSFVYLGHWPSAGSFGFNTDILATNPINLSVVFGVLIFFGKGVLNDLLDNRKQRILNTIRNSEELREGAIQQLENARIRLRKVETEADQFRVNGYSEIEREKLNLINSTYRTLKQLENYKNETILFEQQRTINQVRERVFQQALQGAIGTLNSCLSNELHLRTINANIGMFGTMKEITD.

Residues 27 to 49 (LATNPINLSVVFGVLIFFGKGVL) traverse the membrane as a helical segment.

This sequence belongs to the ATPase B chain family. As to quaternary structure, F-type ATPases have 2 components, F(1) - the catalytic core - and F(0) - the membrane proton channel. F(1) has five subunits: alpha(3), beta(3), gamma(1), delta(1), epsilon(1). F(0) has four main subunits: a(1), b(1), b'(1) and c(10-14). The alpha and beta chains form an alternating ring which encloses part of the gamma chain. F(1) is attached to F(0) by a central stalk formed by the gamma and epsilon chains, while a peripheral stalk is formed by the delta, b and b' chains.

Its subcellular location is the plastid. The protein resides in the chloroplast thylakoid membrane. Functionally, f(1)F(0) ATP synthase produces ATP from ADP in the presence of a proton or sodium gradient. F-type ATPases consist of two structural domains, F(1) containing the extramembraneous catalytic core and F(0) containing the membrane proton channel, linked together by a central stalk and a peripheral stalk. During catalysis, ATP synthesis in the catalytic domain of F(1) is coupled via a rotary mechanism of the central stalk subunits to proton translocation. Component of the F(0) channel, it forms part of the peripheral stalk, linking F(1) to F(0). The chain is ATP synthase subunit b, chloroplastic from Arabis hirsuta (Hairy rock-cress).